We begin with the raw amino-acid sequence, 92 residues long: MARSLKKGPFADEHLLKKVDAILEGKMPKKPIKTWSRRSTIFPSFIGLTFQVHNGHQHIDVYVTDDMVGHKLGEFVPTRTYSGHGAEKGKKK.

Belongs to the universal ribosomal protein uS19 family.

Functionally, protein S19 forms a complex with S13 that binds strongly to the 16S ribosomal RNA. The protein is Small ribosomal subunit protein uS19 of Mycoplasmopsis agalactiae (strain NCTC 10123 / CIP 59.7 / PG2) (Mycoplasma agalactiae).